Consider the following 256-residue polypeptide: 5'-nucleotidase SurE (256 aa).

A divalent metal cation contacts are provided by D8, D9, S39, and N95.

This sequence belongs to the SurE nucleotidase family. It depends on a divalent metal cation as a cofactor.

It localises to the cytoplasm. The enzyme catalyses a ribonucleoside 5'-phosphate + H2O = a ribonucleoside + phosphate. Functionally, nucleotidase that shows phosphatase activity on nucleoside 5'-monophosphates. This chain is 5'-nucleotidase SurE, found in Methanosphaera stadtmanae (strain ATCC 43021 / DSM 3091 / JCM 11832 / MCB-3).